The sequence spans 248 residues: Protein GrpE (248 aa).

The disordered stretch occupies residues 229-248 (AAPKEDTLPAQENQSSPADS). Residues 238–248 (AQENQSSPADS) show a composition bias toward polar residues.

Belongs to the GrpE family. As to quaternary structure, homodimer.

The protein localises to the cytoplasm. Participates actively in the response to hyperosmotic and heat shock by preventing the aggregation of stress-denatured proteins, in association with DnaK and GrpE. It is the nucleotide exchange factor for DnaK and may function as a thermosensor. Unfolded proteins bind initially to DnaJ; upon interaction with the DnaJ-bound protein, DnaK hydrolyzes its bound ATP, resulting in the formation of a stable complex. GrpE releases ADP from DnaK; ATP binding to DnaK triggers the release of the substrate protein, thus completing the reaction cycle. Several rounds of ATP-dependent interactions between DnaJ, DnaK and GrpE are required for fully efficient folding. In Nostoc sp. (strain PCC 7120 / SAG 25.82 / UTEX 2576), this protein is Protein GrpE.